A 257-amino-acid chain; its full sequence is NAD-capped RNA hydrolase NudC (257 aa).

R69 lines the substrate pocket. Positions 98 and 101 each coordinate Zn(2+). E111 contacts substrate. Zn(2+)-binding residues include C116 and C119. A substrate-binding site is contributed by Y124. The region spanning 125–248 (PQIAPCIIVA…TVARRLIEDT (124 aa)) is the Nudix hydrolase domain. A divalent metal cation-binding residues include A158, E174, and E178. The Nudix box motif lies at 159-180 (GFVEVGETLEQAVAREVMEESG). 192 to 199 (QPWPFPQS) lines the substrate pocket. E219 lines the a divalent metal cation pocket. A substrate-binding site is contributed by A241.

It belongs to the Nudix hydrolase family. NudC subfamily. In terms of assembly, homodimer. It depends on Mg(2+) as a cofactor. Requires Mn(2+) as cofactor. Zn(2+) is required as a cofactor.

It carries out the reaction a 5'-end NAD(+)-phospho-ribonucleoside in mRNA + H2O = a 5'-end phospho-adenosine-phospho-ribonucleoside in mRNA + beta-nicotinamide D-ribonucleotide + 2 H(+). The catalysed reaction is NAD(+) + H2O = beta-nicotinamide D-ribonucleotide + AMP + 2 H(+). It catalyses the reaction NADH + H2O = reduced beta-nicotinamide D-ribonucleotide + AMP + 2 H(+). Its function is as follows. mRNA decapping enzyme that specifically removes the nicotinamide adenine dinucleotide (NAD) cap from a subset of mRNAs by hydrolyzing the diphosphate linkage to produce nicotinamide mononucleotide (NMN) and 5' monophosphate mRNA. The NAD-cap is present at the 5'-end of some mRNAs and stabilizes RNA against 5'-processing. Has preference for mRNAs with a 5'-end purine. Catalyzes the hydrolysis of a broad range of dinucleotide pyrophosphates. This is NAD-capped RNA hydrolase NudC from Salmonella agona (strain SL483).